We begin with the raw amino-acid sequence, 1108 residues long: Serine/threonine-protein kinase AKL1 (1108 aa).

An N-acetylserine modification is found at Ser-2. Residue Ser-10 is modified to Phosphoserine. The Protein kinase domain maps to 35-319; the sequence is VEVVNYLAEG…IYQVLYHLCE (285 aa). Residues 41 to 49 and Lys-70 contribute to the ATP site; that span reads LAEGGFAQI. Asp-181 acts as the Proton acceptor in catalysis. The segment at 405–466 is disordered; sequence IPSQNVGQEL…QSPGIEDKSI (62 aa). Ser-407 carries the phosphoserine modification. Positions 419-435 are enriched in basic and acidic residues; it reads ESQSDQRKSTLSEDKSS. The segment covering 436–449 has biased composition (low complexity); sequence RTTSNANSSGTANN. Thr-471 carries the post-translational modification Phosphothreonine. Residues 493 to 513 show a composition bias toward polar residues; sequence KQSSDPTISEQSPRLNTQSLP. Residues 493-534 are disordered; the sequence is KQSSDPTISEQSPRLNTQSLPQRQKSTSSYSSGGRSMKSTSY. Ser-504 bears the Phosphoserine mark. Positions 514 to 534 are enriched in low complexity; that stretch reads QRQKSTSSYSSGGRSMKSTSY. Phosphoserine is present on residues Ser-541 and Ser-574. The segment covering 590–629 has biased composition (low complexity); the sequence is QQQGQRYQQAQNQTGTQGNTFPDESQYQSRVEQQQQQQDQ. Disordered stretches follow at residues 590–663 and 765–791; these read QQQG…GDSG and EDMRNAQGGEPPILAGNSANEPMHSSS. Residues 781–791 show a composition bias toward polar residues; sequence NSANEPMHSSS. Ser-801 carries the phosphoserine modification. A disordered region spans residues 807-838; that stretch reads AGKQSFQDTNEPQTGGIEDAGGSGTIKGSNNN. The span at 810 to 819 shows a compositional bias: polar residues; sequence QSFQDTNEPQ. A Phosphoserine modification is found at Ser-846. The interval 858 to 1108 is disordered; sequence GAAVSSFSSS…SFFSVFRSEK (251 aa). Low complexity predominate over residues 859–872; it reads AAVSSFSSSSSSAS. A compositionally biased stretch (basic and acidic residues) spans 910 to 934; the sequence is DDARRGKTAERRPLHNERGHKDQAR. Positions 935–976 are enriched in polar residues; it reads SSDASKSNQFKSKDFSSVSTRQPRQSLDLNFQEVNLSSPTLT. 2 positions are modified to phosphoserine: Ser-953 and Ser-960. Residues 1006–1048 are compositionally biased toward basic and acidic residues; sequence ENKRHSTGHELSTRSNGKHETHRTGSKQRHDLERYRHSKDKDS. Glycyl lysine isopeptide (Lys-Gly) (interchain with G-Cter in ubiquitin) cross-links involve residues Lys-1008 and Lys-1046. The residue at position 1048 (Ser-1048) is a Phosphoserine. The segment covering 1049–1060 has biased composition (low complexity); sequence NSSITISTSTPS. Positions 1071–1082 are enriched in basic and acidic residues; sequence QSLDLERVRREA. At Ser-1072 the chain carries Phosphoserine.

Belongs to the protein kinase superfamily. Ser/Thr protein kinase family.

The enzyme catalyses L-seryl-[protein] + ATP = O-phospho-L-seryl-[protein] + ADP + H(+). The catalysed reaction is L-threonyl-[protein] + ATP = O-phospho-L-threonyl-[protein] + ADP + H(+). Its function is as follows. Phosphorylates SCD5. The polypeptide is Serine/threonine-protein kinase AKL1 (AKL1) (Saccharomyces cerevisiae (strain ATCC 204508 / S288c) (Baker's yeast)).